A 72-amino-acid polypeptide reads, in one-letter code: Protein RALF-like 12 (72 aa).

An N-terminal signal peptide occupies residues 1–17 (MKAWVIGLLVICAVVIA). 2 disulfides stabilise this stretch: C34/C43 and C63/C69. The segment at 37–60 (PNPPPGCNPPGTEQKNPTPVNEYS) is disordered.

Belongs to the plant rapid alkalinization factor (RALF) family.

Its subcellular location is the secreted. In terms of biological role, cell signaling peptide that may regulate plant stress, growth, and development. Mediates a rapid alkalinization of extracellular space by mediating a transient increase in the cytoplasmic Ca(2+) concentration leading to a calcium-dependent signaling events through a cell surface receptor and a concomitant activation of some intracellular mitogen-activated protein kinases. The protein is Protein RALF-like 12 (RALFL12) of Arabidopsis thaliana (Mouse-ear cress).